The following is a 1413-amino-acid chain: Alpha-latrocrustotoxin-Lt1a (1413 aa).

Residues 1 to 28 constitute a propeptide that is removed on maturation; that stretch reads VSIFIFHFSANILVRNSEMKGKRVISKR. Positions 238–257 are helix H8 is the probable transmembrane region of the tetrameric pore inserted in the target cell membrane; the sequence is ALFALFYGTQTFISIMFYLV. ANK repeat units follow at residues 457-490, 494-524, 528-557, 562-592, 596-625, 629-658, 664-694, 699-729, 733-762, 766-795, 799-828, 832-861, 866-895, 899-928, 965-995, 996-1026, 1031-1072, 1077-1106, 1109-1139, and 1143-1172; these read DIHRDLYNAAQMPYKETALGICRKLIDSGAQVGA, MGRKSIHASATAGNDDVARLLLAKNNGLLNV, NGYTPLHIASERKNNDFVKFLLEKGADVNV, NELTPLHLAARQDFTIIVKTLMEKRGIDVNA, AGFTPLHLSITSNSRAARTLINETPAGINI, SGLTPLHLAVLQNNLSAAKVLVKSNKKVKL, NGMTPLHYASMLGNLEFVKYFTSEQGIDVNA, KNWTPLHLAILFKKFDVAQSLLQVRNIDIST, QAITPLHLAAATGNSQIVKTILNSGAVVDQ, NGFTALHLAIMNPNTETPQFLIAKGANINA, DGSTPLHFAAALGKTNIFQLLMDKGANIKA, INQMPIHEAVVNGHLAIVKMLIEQDSSLMN, RDEYPFYLAAEKRYKDVFNYLESKGADVNE, DGNTLLHLFSINGEVEVVQFLIQNGADFRL, RGKTILYHAICDSVKYDRIEVVRYFVETLNE, DQCSPLQEAAAYAHLDLVKYFVQERGINPTA, NQVS…DINK, QQSTPVSSAVYGNKVSILNYLIRNGADPNK, RGDPPLFIAAMIGQYDIVKSLVEQHKIDVNT, and EQFTPLHAAASNDHIDVVKYLIQKGADVNA. The propeptide occupies 1193–1413; that stretch reads RSLGRRFFRN…NRPTNVLQIK (221 aa).

This sequence belongs to the cationic peptide 01 (latrotoxin) family. 01 (alpha-latrocrustotoxin) subfamily. Homotetramer in membranes. As to expression, expressed by the venom gland.

Its subcellular location is the secreted. It localises to the target cell membrane. Crustacean-selective presynaptic neurotoxin that induces neurotransmitter exocytosis. May bind to crustacean neurexin-1 homolog, adhesion G protein-coupled receptor L1 homolog, and receptor-type tyrosine-protein phosphatase S homolog, and induces neurotransmitter exocytosis both by forming tetrameric pores in membranes and signaling via G protein-coupled receptor. This recombinant protein form channels in artificial membrane bilayers, that are stabilized by calcium ions and allow calcium flux at negative membrane potentials. The chain is Alpha-latrocrustotoxin-Lt1a from Latrodectus tredecimguttatus (Mediterranean black widow spider).